A 462-amino-acid polypeptide reads, in one-letter code: Sugar transporter ERD6-like 2 (462 aa).

The next 12 membrane-spanning stretches (helical) occupy residues 23-43 (SGLL…GCAM), 70-90 (VMTL…ALVG), 96-116 (WISD…HDII), 123-143 (LFLG…IAEI), 156-176 (NQLL…FFHW), 178-198 (TLAL…FFIP), 261-281 (LIIG…AISA), 296-316 (IGTT…MLTV), 324-344 (LLMI…LSYY), 357-377 (VMLI…LGGL), 397-417 (LVTM…NFMI), and 423-443 (GTYF…WTLV).

Belongs to the major facilitator superfamily. Sugar transporter (TC 2.A.1.1) family.

The protein resides in the membrane. In terms of biological role, sugar transporter. The protein is Sugar transporter ERD6-like 2 (SUGTL3) of Arabidopsis thaliana (Mouse-ear cress).